The primary structure comprises 434 residues: Adenylosuccinate synthetase (434 aa).

GTP is bound by residues 11-17 and 39-41; these read GDEGKGK and GHT. The active-site Proton acceptor is the aspartate 12. Residues aspartate 12 and glycine 39 each contribute to the Mg(2+) site. IMP-binding positions include 12 to 15, 37 to 40, threonine 134, arginine 148, asparagine 230, threonine 245, and arginine 309; these read DEGK and NAGH. The Proton donor role is filled by histidine 40. Residue 305 to 311 participates in substrate binding; that stretch reads VTTGRKR. Residues arginine 311, 337-339, and 419-421 each bind GTP; these read KLD and GTG.

The protein belongs to the adenylosuccinate synthetase family. In terms of assembly, homodimer. The cofactor is Mg(2+).

Its subcellular location is the cytoplasm. The catalysed reaction is IMP + L-aspartate + GTP = N(6)-(1,2-dicarboxyethyl)-AMP + GDP + phosphate + 2 H(+). Its pathway is purine metabolism; AMP biosynthesis via de novo pathway; AMP from IMP: step 1/2. Functionally, plays an important role in the de novo pathway and in the salvage pathway of purine nucleotide biosynthesis. Catalyzes the first committed step in the biosynthesis of AMP from IMP. In Lachancea thermotolerans (strain ATCC 56472 / CBS 6340 / NRRL Y-8284) (Yeast), this protein is Adenylosuccinate synthetase.